Consider the following 1241-residue polypeptide: Interphotoreceptor matrix proteoglycan 2 (1241 aa).

Positions 1–28 (MIMFLPLGRISLGILILFLTGGNLVSVS) are cleaved as a signal peptide. Residues 29–1104 (EEIQDRMHAV…CEEFVSEPFV (1076 aa)) are Extracellular-facing. T193 carries an O-linked (GalNAc...) threonine glycan. Residues 206–234 (AASERSAASPQESISNEIENVTEQPTPPA) are disordered. The span at 211-229 (SAASPQESISNEIENVTEQ) shows a compositional bias: polar residues. The N-linked (GlcNAc...) asparagine glycan is linked to N225. O-linked (GalNAc...) threonine glycosylation occurs at T231. The SEA 1 domain maps to 235-349 (AEQIAEFSIQ…KPTAVYTISN (115 aa)). Residues 255–263 (RDPSSALYR) are hyaluronan-binding motif involved in chondroitin sulfate A-binding. N-linked (GlcNAc...) asparagine glycosylation is found at N297, N316, and N366. Residues T429, T430, and T431 are each glycosylated (O-linked (GalNAc...) threonine). The segment covering 431–443 (TISPFGFSSGPPS) has biased composition (low complexity). Disordered stretches follow at residues 431 to 456 (TISP…STLG) and 500 to 520 (VAPE…TEES). T817 is a glycosylation site (O-linked (GalNAc...) threonine). N-linked (GlcNAc...) asparagine glycans are attached at residues N841, N945, and N959. Residues 900-1013 (GALVVFFSLR…YSLDVESGDD (114 aa)) form the SEA 2 domain. EGF-like domains lie at 1013 to 1054 (DANP…LPCQ) and 1055 to 1096 (SVCD…QHCE). 6 disulfide bridges follow: C1017/C1028, C1022/C1039, C1041/C1053, C1057/C1070, C1064/C1080, and C1082/C1095. The segment at 1083-1091 (RVGSNWWYR) is hyaluronan-binding motif involved in chondroitin sulfate C-binding. A helical transmembrane segment spans residues 1105-1125 (IGITIASVVSLLLVASAVVFF). Residues 1126–1241 (LAKMLQAQNV…FVREHEMEEL (116 aa)) are Cytoplasmic-facing. Positions 1128 to 1136 (KMLQAQNVR) are hyaluronan-binding motif involved in chondroitin sulfate A- and C-binding. The segment at 1139–1145 (RQRPTNR) is hyaluronan-binding motif involved in chondroitin sulfate C-binding. Positions 1210–1218 (KEEIQERMR) are hyaluronan-binding motif involved in chondroitin sulfate A- and C-binding motif.

In terms of tissue distribution, expressed in the pineal gland and the outer layer of the retina.

Its subcellular location is the photoreceptor outer segment membrane. It is found in the photoreceptor inner segment membrane. The protein resides in the secreted. It localises to the extracellular space. The protein localises to the extracellular matrix. Its subcellular location is the interphotoreceptor matrix. Functionally, chondroitin sulfate- and hyaluronan-binding proteoglycan involved in the organization of interphotoreceptor matrix; may participate in the maturation and maintenance of the light-sensitive photoreceptor outer segment. Binds heparin. The protein is Interphotoreceptor matrix proteoglycan 2 (Impg2) of Rattus norvegicus (Rat).